The sequence spans 94 residues: Co-chaperonin GroES (94 aa).

The protein belongs to the GroES chaperonin family. In terms of assembly, heptamer of 7 subunits arranged in a ring. Interacts with the chaperonin GroEL.

The protein resides in the cytoplasm. Its function is as follows. Together with the chaperonin GroEL, plays an essential role in assisting protein folding. The GroEL-GroES system forms a nano-cage that allows encapsulation of the non-native substrate proteins and provides a physical environment optimized to promote and accelerate protein folding. GroES binds to the apical surface of the GroEL ring, thereby capping the opening of the GroEL channel. The polypeptide is Co-chaperonin GroES (Finegoldia magna (strain ATCC 29328 / DSM 20472 / WAL 2508) (Peptostreptococcus magnus)).